We begin with the raw amino-acid sequence, 220 residues long: Cytidylate kinase (220 aa).

10–18 lines the ATP pocket; the sequence is GPASSGKST.

This sequence belongs to the cytidylate kinase family. Type 1 subfamily.

The protein resides in the cytoplasm. It carries out the reaction CMP + ATP = CDP + ADP. The enzyme catalyses dCMP + ATP = dCDP + ADP. This Lactococcus lactis subsp. lactis (strain IL1403) (Streptococcus lactis) protein is Cytidylate kinase.